Consider the following 1583-residue polypeptide: Mediator of RNA polymerase II transcription subunit 12 (1583 aa).

2 disordered regions span residues 1–117 (MIPH…SLSW) and 1481–1525 (SNIP…SGIP). Residues 66–79 (DTSEREPPSKRLRL) show a composition bias toward basic and acidic residues. Low complexity-rich tracts occupy residues 102–114 (TPST…KPSS) and 1490–1514 (PSPA…GSST).

Belongs to the Mediator complex subunit 12 family. Component of the srb8-11 complex, which itself associates with the Mediator complex.

It is found in the nucleus. Component of the srb8-11 complex. The srb8-11 complex is a regulatory module of the Mediator complex which is itself involved in regulation of basal and activated RNA polymerase II-dependent transcription. The srb8-11 complex may be involved in the transcriptional repression of a subset of genes regulated by Mediator. It may inhibit the association of the Mediator complex with RNA polymerase II to form the holoenzyme complex. The polypeptide is Mediator of RNA polymerase II transcription subunit 12 (srb8) (Aspergillus terreus (strain NIH 2624 / FGSC A1156)).